A 179-amino-acid polypeptide reads, in one-letter code: MNEMLKEELLQSIREVKDYPKKGILFKDITTLLNYPKLFNKLIDALKKRYLALNIDFIVGIEARGFILGSAFAYALGVGFVPVRKKGKLPAHTLSQSYSLEYGSDSIEIHSDAFRGIKGVRVVLVDDLLATGGTALASLELIKALQAECIEACFLIGLKELPGIQLLEEHVKTFCLLEC.

The protein belongs to the purine/pyrimidine phosphoribosyltransferase family. Homodimer.

It is found in the cytoplasm. The enzyme catalyses AMP + diphosphate = 5-phospho-alpha-D-ribose 1-diphosphate + adenine. The protein operates within purine metabolism; AMP biosynthesis via salvage pathway; AMP from adenine: step 1/1. Its function is as follows. Catalyzes a salvage reaction resulting in the formation of AMP, that is energically less costly than de novo synthesis. In Helicobacter pylori (strain J99 / ATCC 700824) (Campylobacter pylori J99), this protein is Adenine phosphoribosyltransferase.